A 165-amino-acid chain; its full sequence is Glutamyl-tRNA(Gln) amidotransferase subunit F, mitochondrial (165 aa).

Residues 137–153 are compositionally biased toward basic and acidic residues; the sequence is VSDQRGERGFDTSELRT. Residues 137 to 165 form a disordered region; that stretch reads VSDQRGERGFDTSELRTRINRAKSTAEKE.

The protein belongs to the GatF family. Subunit of the heterotrimeric GatFAB amidotransferase (AdT) complex, composed of A, B and F subunits.

The protein localises to the mitochondrion inner membrane. The enzyme catalyses L-glutamyl-tRNA(Gln) + L-glutamine + ATP + H2O = L-glutaminyl-tRNA(Gln) + L-glutamate + ADP + phosphate + H(+). In terms of biological role, allows the formation of correctly charged Gln-tRNA(Gln) through the transamidation of misacylated Glu-tRNA(Gln) in the mitochondria. The reaction takes place in the presence of glutamine and ATP through an activated gamma-phospho-Glu-tRNA(Gln). Required for proper protein synthesis within the mitochondrion. This Clavispora lusitaniae (strain ATCC 42720) (Yeast) protein is Glutamyl-tRNA(Gln) amidotransferase subunit F, mitochondrial.